Here is a 269-residue protein sequence, read N- to C-terminus: Surfeit locus protein 4 (269 aa).

5 consecutive transmembrane segments (helical) span residues 64–84, 92–112, 179–199, 203–223, and 242–262; these read FLAT…CVLV, YACF…SILW, FFSI…AVGF, LAAL…NAFW, and TTSV…GVSM. The short motif at 266–269 is the Di-lysine motif element; it reads KKEW.

The protein belongs to the SURF4 family.

The protein localises to the endoplasmic reticulum membrane. The protein resides in the endoplasmic reticulum-Golgi intermediate compartment membrane. Its subcellular location is the golgi apparatus membrane. Its function is as follows. Endoplasmic reticulum cargo receptor that mediates the export of lipoproteins by recruiting cargos into COPII vesicles to facilitate their secretion. In Danio rerio (Zebrafish), this protein is Surfeit locus protein 4.